We begin with the raw amino-acid sequence, 389 residues long: Phospho-N-acetylmuramoyl-pentapeptide-transferase (389 aa).

10 consecutive transmembrane segments (helical) span residues 21 to 41, 70 to 90, 97 to 117, 134 to 154, 189 to 209, 222 to 242, 259 to 279, 286 to 306, 311 to 331, and 366 to 386; these read FITF…LFFG, GTPT…TLLW, FVWV…VDDY, YMWQ…SVSA, TISY…VIVG, GLAI…AYLT, AGEL…FLWF, VFMG…IAVI, IVLF…MIQV, and QVVV…LSTL.

It belongs to the glycosyltransferase 4 family. MraY subfamily. The cofactor is Mg(2+).

The protein resides in the cell inner membrane. The catalysed reaction is UDP-N-acetyl-alpha-D-muramoyl-L-alanyl-gamma-D-glutamyl-meso-2,6-diaminopimeloyl-D-alanyl-D-alanine + di-trans,octa-cis-undecaprenyl phosphate = di-trans,octa-cis-undecaprenyl diphospho-N-acetyl-alpha-D-muramoyl-L-alanyl-D-glutamyl-meso-2,6-diaminopimeloyl-D-alanyl-D-alanine + UMP. Its pathway is cell wall biogenesis; peptidoglycan biosynthesis. Catalyzes the initial step of the lipid cycle reactions in the biosynthesis of the cell wall peptidoglycan: transfers peptidoglycan precursor phospho-MurNAc-pentapeptide from UDP-MurNAc-pentapeptide onto the lipid carrier undecaprenyl phosphate, yielding undecaprenyl-pyrophosphoryl-MurNAc-pentapeptide, known as lipid I. This is Phospho-N-acetylmuramoyl-pentapeptide-transferase from Herminiimonas arsenicoxydans.